A 1034-amino-acid polypeptide reads, in one-letter code: Isoleucine--tRNA ligase (1034 aa).

The 'HIGH' region motif lies at 46 to 56 (PYCSGAIHLGT). A 'KMSKS' region motif is present at residues 598 to 602 (KMSKS). An ATP-binding site is contributed by Lys-601.

This sequence belongs to the class-I aminoacyl-tRNA synthetase family. IleS type 2 subfamily. As to quaternary structure, monomer. Zn(2+) serves as cofactor.

It is found in the cytoplasm. The enzyme catalyses tRNA(Ile) + L-isoleucine + ATP = L-isoleucyl-tRNA(Ile) + AMP + diphosphate. Catalyzes the attachment of isoleucine to tRNA(Ile). As IleRS can inadvertently accommodate and process structurally similar amino acids such as valine, to avoid such errors it has two additional distinct tRNA(Ile)-dependent editing activities. One activity is designated as 'pretransfer' editing and involves the hydrolysis of activated Val-AMP. The other activity is designated 'posttransfer' editing and involves deacylation of mischarged Val-tRNA(Ile). The sequence is that of Isoleucine--tRNA ligase from Methanococcus maripaludis (strain DSM 14266 / JCM 13030 / NBRC 101832 / S2 / LL).